The chain runs to 148 residues: Small ribosomal subunit protein bS6 (148 aa).

A disordered region spans residues 96–148 (HEEGQSAMLTRRDDRRERDGDDRPRRREGGFDRGDRGDRGPRRPRDNEAGEGA).

The protein belongs to the bacterial ribosomal protein bS6 family.

In terms of biological role, binds together with bS18 to 16S ribosomal RNA. The chain is Small ribosomal subunit protein bS6 from Brucella melitensis biotype 1 (strain ATCC 23456 / CCUG 17765 / NCTC 10094 / 16M).